We begin with the raw amino-acid sequence, 816 residues long: Phosphatidylinositol 4-kinase beta (816 aa).

A disordered region spans residues 1–30 (MGDTVVEPAPLKPTSEPTSGPPGNNGGSLL). Gly-2 is subject to N-acetylglycine. The 214-residue stretch at 29 to 242 (LLSVITEGVG…GTKLRKLILS (214 aa)) folds into the PIK helical domain. An interaction with ACBD3 region spans residues 41–67 (SVIDPEVAQKACQEVLEKVKLLHGGVA). Disordered regions lie at residues 101 to 120 (EDEMGAAVASGTAKGARRRR) and 248 to 318 (AHRK…SFSS). Position 258 is a phosphoserine (Ser-258). The residue at position 263 (Thr-263) is a Phosphothreonine. Phosphoserine is present on residues Ser-266, Ser-275, Ser-277, Ser-284, and Ser-294. 2 stretches are compositionally biased toward polar residues: residues 278–297 (DATASISLSSNLKRTASNPK) and 306–318 (SSSTESIDNSFSS). Ser-428 is subject to Phosphoserine. Thr-438 carries the phosphothreonine modification. The residue at position 511 (Ser-511) is a Phosphoserine. A phosphothreonine mark is found at Thr-517 and Thr-519. One can recognise a PI3K/PI4K catalytic domain in the interval 535–801 (EPWQEKVRRI…MVDGSMRSIT (267 aa)). The tract at residues 541 to 547 (VRRIREG) is G-loop. A catalytic loop region spans residues 668–676 (QVKDRHNGN). The interval 687–711 (HIDFGFILSSSPRNLGFETSAFKLT) is activation loop.

The protein belongs to the PI3/PI4-kinase family. Type III PI4K subfamily. Interacts with ARF1 and ARF3 in the Golgi complex, but not with ARF4, ARF5 or ARF6. Interacts with NCS1/FREQ in a calcium-independent manner. Interacts with CALN1/CABP8 and CALN2/CABP7; in a calcium-dependent manner; this interaction competes with NCS1/FREQ binding. Interacts with ACBD3. Interacts with ARMH3, YWHAB, YWHAE, YWHAG, YWHAH, YWHAQ, YWHAZ and SFN. Interacts with GGA2 (via VHS domain); the interaction is important for PI4KB location at the Golgi apparatus membrane. Interacts with ATG9A. As to quaternary structure, (Microbial infection) Interacts with Aichi virus protein 3A. Part of a complex Aichi virus protein 3A/ACBD3/PI4KB that allows the synthesis of PI4P at the viral RNA replication sites. Requires Mg(2+) as cofactor. Mn(2+) is required as a cofactor. Widely expressed with highest levels in heart, skeletal muscle, pancreas, testis and ovary. Weakly expressed in liver. Expressed in the innear ear in the epithelium of the spinal organ of corti.

It is found in the endomembrane system. It localises to the mitochondrion outer membrane. The protein localises to the rough endoplasmic reticulum membrane. The protein resides in the golgi apparatus. Its subcellular location is the golgi apparatus membrane. It is found in the cytoplasm. It localises to the perinuclear region. The catalysed reaction is a 1,2-diacyl-sn-glycero-3-phospho-(1D-myo-inositol) + ATP = a 1,2-diacyl-sn-glycero-3-phospho-(1D-myo-inositol 4-phosphate) + ADP + H(+). Its activity is regulated as follows. Inhibited by wortmannin and adenosine. Increased kinase activity upon interaction with NCS1/FREQ. With respect to regulation, (Microbial infection) Activated by Aichi virus protein 3A, this activation is sensitized by ACBD3. Its function is as follows. Phosphorylates phosphatidylinositol (PI) in the first committed step in the production of the second messenger inositol-1,4,5,-trisphosphate (PIP). May regulate Golgi disintegration/reorganization during mitosis, possibly via its phosphorylation. Involved in Golgi-to-plasma membrane trafficking. May play an important role in the inner ear development. In terms of biological role, (Microbial infection) Plays an essential role in Aichi virus RNA replication. Recruited by ACBD3 at the viral replication sites. Functionally, (Microbial infection) Required for cellular spike-mediated entry of human coronavirus SARS-CoV. The polypeptide is Phosphatidylinositol 4-kinase beta (Homo sapiens (Human)).